The chain runs to 315 residues: MLIVTGGAGFIGSNIVQALNARGREDILVVDDLTDGTKFANIADARICDYLDKDEFLRRIASGDSFGDRIEAIIHQGACSTTTEWDGRYMMENNYAYSKTLLHYCLERRIPFLYASSAATYGGGQVFCEEPQYERPLNVYGYSKALFDQYVRRVLPTADSQVAGFRYFNVYGPREQHKGSMASVAFHLRNQLLKDGSVNLFEGCDGYGDGEQRRDFIYVGDVVDVNLWFLDHPEVSGIYNVGTGRSQTFNDVAHAVLKAHEGGELQYVPFPEHLKGRYQSFTEADLTRLRGAGFDGSFLTVEEGVARYMEWLQQN.

NADP(+)-binding positions include 10–11, 31–32, Lys-38, Lys-53, 76–80, and Asn-93; these read FI, DD, and QGACS. Tyr-140 (proton acceptor) is an active-site residue. Residue Lys-144 participates in NADP(+) binding. Asn-169 lines the substrate pocket. Residues Val-170 and Lys-178 each coordinate NADP(+). Lys-178 serves as the catalytic Proton acceptor. Substrate is bound by residues Ser-180, His-187, 201-204, Arg-214, and Tyr-278; that span reads FEGC.

The protein belongs to the NAD(P)-dependent epimerase/dehydratase family. HldD subfamily. Homopentamer. The cofactor is NADP(+).

The enzyme catalyses ADP-D-glycero-beta-D-manno-heptose = ADP-L-glycero-beta-D-manno-heptose. It participates in nucleotide-sugar biosynthesis; ADP-L-glycero-beta-D-manno-heptose biosynthesis; ADP-L-glycero-beta-D-manno-heptose from D-glycero-beta-D-manno-heptose 7-phosphate: step 4/4. Catalyzes the interconversion between ADP-D-glycero-beta-D-manno-heptose and ADP-L-glycero-beta-D-manno-heptose via an epimerization at carbon 6 of the heptose. This is ADP-L-glycero-D-manno-heptose-6-epimerase from Syntrophotalea carbinolica (strain DSM 2380 / NBRC 103641 / GraBd1) (Pelobacter carbinolicus).